Consider the following 587-residue polypeptide: Arginine--tRNA ligase (587 aa).

The 'HIGH' region signature appears at 126-136; that stretch reads ANPTGPLHVGH.

The protein belongs to the class-I aminoacyl-tRNA synthetase family. As to quaternary structure, monomer.

Its subcellular location is the cytoplasm. The enzyme catalyses tRNA(Arg) + L-arginine + ATP = L-arginyl-tRNA(Arg) + AMP + diphosphate. The protein is Arginine--tRNA ligase of Aromatoleum aromaticum (strain DSM 19018 / LMG 30748 / EbN1) (Azoarcus sp. (strain EbN1)).